The following is a 351-amino-acid chain: Gene 58 protein (351 aa).

Transmembrane regions (helical) follow at residues 14–34, 43–63, 70–90, 97–117, 133–153, 155–175, 214–234, 240–260, 268–288, 293–313, and 328–348; these read FSTGLLASSSIVWSYIFATVF, QSVLYVWSLPIVQLAAIFCAV, LGLLLLLNCGIAFLSFISWSL, LVPGLFVINFLSLMIWLIVCF, LGFLASLTIHYCFNQFEIYLT, VMFAPFFICMLFGYIGFSHVW, LICLWFLLLAMAAGCIALVMF, GVSTYLYLFMVGNFCCGSLII, AVYSVVSLTAFFLILMGGYLF, LSMLAAVMFFCYFHANGCLLY, and FILNVCMLLNALLEITVLLAQ.

This sequence belongs to the herpesviridae BMRF2 family.

The protein resides in the host membrane. In Connochaetes taurinus (Blue wildebeest), this protein is Gene 58 protein (58).